We begin with the raw amino-acid sequence, 177 residues long: ATP synthase subunit b (177 aa).

Residues 16-36 traverse the membrane as a helical segment; sequence HLLLANMIVTIVVFLLLLILL.

Belongs to the ATPase B chain family. In terms of assembly, F-type ATPases have 2 components, F(1) - the catalytic core - and F(0) - the membrane proton channel. F(1) has five subunits: alpha(3), beta(3), gamma(1), delta(1), epsilon(1). F(0) has three main subunits: a(1), b(2) and c(10-14). The alpha and beta chains form an alternating ring which encloses part of the gamma chain. F(1) is attached to F(0) by a central stalk formed by the gamma and epsilon chains, while a peripheral stalk is formed by the delta and b chains.

The protein resides in the cell membrane. Functionally, f(1)F(0) ATP synthase produces ATP from ADP in the presence of a proton or sodium gradient. F-type ATPases consist of two structural domains, F(1) containing the extramembraneous catalytic core and F(0) containing the membrane proton channel, linked together by a central stalk and a peripheral stalk. During catalysis, ATP synthesis in the catalytic domain of F(1) is coupled via a rotary mechanism of the central stalk subunits to proton translocation. Its function is as follows. Component of the F(0) channel, it forms part of the peripheral stalk, linking F(1) to F(0). The chain is ATP synthase subunit b from Exiguobacterium sibiricum (strain DSM 17290 / CCUG 55495 / CIP 109462 / JCM 13490 / 255-15).